Here is a 74-residue protein sequence, read N- to C-terminus: Protein DELETION OF SUV3 SUPPRESSOR 1(I) (74 aa).

The tract at residues 35 to 74 is disordered; that stretch reads EKEEVKEVSQQWEDDWDDDDVNDDFSRQLRKELENGTDKK. Positions 46-57 are enriched in acidic residues; that stretch reads WEDDWDDDDVND. Positions 58–74 are enriched in basic and acidic residues; that stretch reads DFSRQLRKELENGTDKK.

The protein belongs to the DSS1/SEM1 family. In terms of assembly, part of the 26S proteasome. Interacts with BRCA2A and BRCA2B. Interacts with UCH1 and UCH2. Can form a tripartite complex with both RAD51 and BRCA2B or both DMC1 and BRCA2B.

Its function is as follows. Subunit of the 26S proteasome which plays a role in ubiquitin-dependent proteolysis. This is Protein DELETION OF SUV3 SUPPRESSOR 1(I) from Arabidopsis thaliana (Mouse-ear cress).